A 381-amino-acid polypeptide reads, in one-letter code: Homoserine O-succinyltransferase (381 aa).

The AB hydrolase-1 domain occupies N45 to D360. The Nucleophile role is filled by S151. R221 contacts substrate. Active-site residues include D321 and H354. D355 is a substrate binding site.

This sequence belongs to the AB hydrolase superfamily. MetX family. In terms of assembly, homodimer.

Its subcellular location is the cytoplasm. It catalyses the reaction L-homoserine + succinyl-CoA = O-succinyl-L-homoserine + CoA. The protein operates within amino-acid biosynthesis; L-methionine biosynthesis via de novo pathway; O-succinyl-L-homoserine from L-homoserine: step 1/1. Functionally, transfers a succinyl group from succinyl-CoA to L-homoserine, forming succinyl-L-homoserine. The polypeptide is Homoserine O-succinyltransferase (Burkholderia cenocepacia (strain ATCC BAA-245 / DSM 16553 / LMG 16656 / NCTC 13227 / J2315 / CF5610) (Burkholderia cepacia (strain J2315))).